The sequence spans 211 residues: Dual specificity protein phosphatase 26 (211 aa).

The Tyrosine-protein phosphatase domain occupies asparagine 60–glutamine 207. Cysteine 152 (phosphocysteine intermediate) is an active-site residue.

Belongs to the protein-tyrosine phosphatase family. Non-receptor class dual specificity subfamily. In terms of assembly, interacts with HSF4.

Its subcellular location is the cytoplasm. It localises to the nucleus. It is found in the golgi apparatus. The catalysed reaction is O-phospho-L-tyrosyl-[protein] + H2O = L-tyrosyl-[protein] + phosphate. It carries out the reaction O-phospho-L-seryl-[protein] + H2O = L-seryl-[protein] + phosphate. It catalyses the reaction O-phospho-L-threonyl-[protein] + H2O = L-threonyl-[protein] + phosphate. Functionally, inactivates MAPK1 and MAPK3 which leads to dephosphorylation of heat shock factor protein 4 and a reduction in its DNA-binding activity. This chain is Dual specificity protein phosphatase 26 (Dusp26), found in Rattus norvegicus (Rat).